The primary structure comprises 274 residues: DNA damage-inducible protein D (274 aa).

The sequence is that of DNA damage-inducible protein D (dinD) from Escherichia coli (strain K12).